Here is a 163-residue protein sequence, read N- to C-terminus: Nucleotide-binding protein BBR47_25280 (163 aa).

The protein belongs to the YajQ family.

Nucleotide-binding protein. This chain is Nucleotide-binding protein BBR47_25280, found in Brevibacillus brevis (strain 47 / JCM 6285 / NBRC 100599).